Here is a 28-residue protein sequence, read N- to C-terminus: Conotoxin Vi14b (28 aa).

Intrachain disulfides connect C4–C21 and C7–C18. Residues K15 and K25 each carry the N6-acetyllysine modification.

Post-translationally, the two N6-acetyllysines at position 15 and 25 have been deduced from the mass difference of 42. They are not common in venom proteins. As to expression, expressed by the venom gland.

Its subcellular location is the secreted. In vitro, inhibits proliferation of the mice ovarian cancer cells ID8. The polypeptide is Conotoxin Vi14b (Conus virgo (Virgin cone)).